The sequence spans 461 residues: Bifunctional protein GlmU (461 aa).

Residues 1–229 (MEKYVVVLAA…FSESLGVNDR (229 aa)) are pyrophosphorylase. UDP-N-acetyl-alpha-D-glucosamine contacts are provided by residues 8–11 (LAAG), Lys-22, Gln-72, and 77–78 (GT). Mg(2+) is bound at residue Asp-102. Residues Gly-139, Glu-154, Asn-169, and Asn-227 each coordinate UDP-N-acetyl-alpha-D-glucosamine. Mg(2+) is bound at residue Asn-227. The tract at residues 230–250 (IALAEATRIMQRRINEGHMRD) is linker. The interval 251-461 (GVTFIDPATA…LPLSEDEEWK (211 aa)) is N-acetyltransferase. UDP-N-acetyl-alpha-D-glucosamine is bound by residues Arg-332 and Lys-350. Residue His-362 is the Proton acceptor of the active site. Positions 365 and 376 each coordinate UDP-N-acetyl-alpha-D-glucosamine. Acetyl-CoA contacts are provided by Ala-422 and Arg-439.

This sequence in the N-terminal section; belongs to the N-acetylglucosamine-1-phosphate uridyltransferase family. The protein in the C-terminal section; belongs to the transferase hexapeptide repeat family. Homotrimer. Requires Mg(2+) as cofactor.

The protein localises to the cytoplasm. The enzyme catalyses alpha-D-glucosamine 1-phosphate + acetyl-CoA = N-acetyl-alpha-D-glucosamine 1-phosphate + CoA + H(+). It catalyses the reaction N-acetyl-alpha-D-glucosamine 1-phosphate + UTP + H(+) = UDP-N-acetyl-alpha-D-glucosamine + diphosphate. It participates in nucleotide-sugar biosynthesis; UDP-N-acetyl-alpha-D-glucosamine biosynthesis; N-acetyl-alpha-D-glucosamine 1-phosphate from alpha-D-glucosamine 6-phosphate (route II): step 2/2. The protein operates within nucleotide-sugar biosynthesis; UDP-N-acetyl-alpha-D-glucosamine biosynthesis; UDP-N-acetyl-alpha-D-glucosamine from N-acetyl-alpha-D-glucosamine 1-phosphate: step 1/1. It functions in the pathway bacterial outer membrane biogenesis; LPS lipid A biosynthesis. Functionally, catalyzes the last two sequential reactions in the de novo biosynthetic pathway for UDP-N-acetylglucosamine (UDP-GlcNAc). The C-terminal domain catalyzes the transfer of acetyl group from acetyl coenzyme A to glucosamine-1-phosphate (GlcN-1-P) to produce N-acetylglucosamine-1-phosphate (GlcNAc-1-P), which is converted into UDP-GlcNAc by the transfer of uridine 5-monophosphate (from uridine 5-triphosphate), a reaction catalyzed by the N-terminal domain. In Lactobacillus delbrueckii subsp. bulgaricus (strain ATCC 11842 / DSM 20081 / BCRC 10696 / JCM 1002 / NBRC 13953 / NCIMB 11778 / NCTC 12712 / WDCM 00102 / Lb 14), this protein is Bifunctional protein GlmU.